A 607-amino-acid chain; its full sequence is Guanine nucleotide-binding protein-like 1 (607 aa).

Positions 1–14 (MPRKKPFSVKQKKK) are enriched in basic residues. Residues 1–81 (MPRKKPFSVK…GPRGYDPNRY (81 aa)) form a disordered region. Positions 15–26 (QLQDKRERKRGL) are enriched in basic and acidic residues. 3 positions are modified to phosphoserine: serine 32, serine 33, and serine 34. A phosphothreonine mark is found at threonine 48 and threonine 50. Phosphoserine occurs at positions 51 and 68. Residues 178-418 (WRQLWRVLEM…LCDCPGLIFP (241 aa)) form the CP-type G domain. Position 225–228 (225–228 (NKVD)) interacts with GTP. The residue at position 324 (serine 324) is a Phosphoserine. GTP-binding positions include 367–374 (GFPNVGKS) and 411–415 (DCPGL). Residues 547-607 (GPAGDEEEEE…PYALLGEDEC (61 aa)) are disordered. Positions 550 to 584 (GDEEEEEEEELSSSCEEEGEEDRDADEEGEGDEDT) are enriched in acidic residues. Phosphoserine is present on residues serine 561, serine 562, and serine 563.

This sequence belongs to the TRAFAC class YlqF/YawG GTPase family.

In terms of biological role, possible regulatory or functional link with the histocompatibility cluster. This Pongo abelii (Sumatran orangutan) protein is Guanine nucleotide-binding protein-like 1 (GNL1).